We begin with the raw amino-acid sequence, 224 residues long: Thylakoid lumenal 15 kDa protein 1, chloroplastic (224 aa).

The N-terminal 34 residues, 1 to 34, are a transit peptide targeting the chloroplast; that stretch reads MVILSNVSLFSCCNISQKPSLFSPSSRSSHCPIR. A thylakoid-targeting transit peptide spans 35–81; the sequence is CSQSQEGKEVVTSPLRSVVWSLGEEVSKRSLFALVSASLFFVDPALA. Pentapeptide repeat domains follow at residues 116–155 and 156–196; these read SILRQANFKGAKLLGASFFDADLTGADLSEADLRGADFSL and ANVT…PLRD.

The protein localises to the plastid. It localises to the chloroplast thylakoid lumen. In Arabidopsis thaliana (Mouse-ear cress), this protein is Thylakoid lumenal 15 kDa protein 1, chloroplastic.